The chain runs to 198 residues: Pyridoxal 5'-phosphate synthase subunit PdxT (198 aa).

52-54 (GES) is a binding site for L-glutamine. Cysteine 84 functions as the Nucleophile in the catalytic mechanism. Residues arginine 116 and 143–144 (IR) contribute to the L-glutamine site. Catalysis depends on charge relay system residues histidine 179 and glutamate 181.

Belongs to the glutaminase PdxT/SNO family. As to quaternary structure, in the presence of PdxS, forms a dodecamer of heterodimers. Only shows activity in the heterodimer.

It carries out the reaction aldehydo-D-ribose 5-phosphate + D-glyceraldehyde 3-phosphate + L-glutamine = pyridoxal 5'-phosphate + L-glutamate + phosphate + 3 H2O + H(+). The enzyme catalyses L-glutamine + H2O = L-glutamate + NH4(+). It participates in cofactor biosynthesis; pyridoxal 5'-phosphate biosynthesis. Functionally, catalyzes the hydrolysis of glutamine to glutamate and ammonia as part of the biosynthesis of pyridoxal 5'-phosphate. The resulting ammonia molecule is channeled to the active site of PdxS. The sequence is that of Pyridoxal 5'-phosphate synthase subunit PdxT from Caldivirga maquilingensis (strain ATCC 700844 / DSM 13496 / JCM 10307 / IC-167).